Reading from the N-terminus, the 235-residue chain is Small ribosomal subunit protein uS3 (235 aa).

The region spanning 39-107 is the KH type-2 domain; sequence VRSYVKKKLI…PAQVNISEIR (69 aa).

The protein belongs to the universal ribosomal protein uS3 family. In terms of assembly, part of the 30S ribosomal subunit. Forms a tight complex with proteins S10 and S14.

In terms of biological role, binds the lower part of the 30S subunit head. Binds mRNA in the 70S ribosome, positioning it for translation. This chain is Small ribosomal subunit protein uS3, found in Buchnera aphidicola subsp. Cinara cedri (strain Cc).